The chain runs to 359 residues: Protein mab-21-like 2 (359 aa).

Belongs to the mab-21 family.

The protein resides in the nucleus. Its subcellular location is the cytoplasm. Its function is as follows. Required for several aspects of embryonic development including normal development of the eye. This Homo sapiens (Human) protein is Protein mab-21-like 2 (MAB21L2).